The sequence spans 370 residues: UDP-N-acetylglucosamine--N-acetylmuramyl-(pentapeptide) pyrophosphoryl-undecaprenol N-acetylglucosamine transferase (370 aa).

Residues Thr15–Gly17, Asn129, Arg171, Ser200, Ile256, and Gln301 contribute to the UDP-N-acetyl-alpha-D-glucosamine site.

The protein belongs to the glycosyltransferase 28 family. MurG subfamily.

It is found in the cell membrane. The catalysed reaction is di-trans,octa-cis-undecaprenyl diphospho-N-acetyl-alpha-D-muramoyl-L-alanyl-D-glutamyl-meso-2,6-diaminopimeloyl-D-alanyl-D-alanine + UDP-N-acetyl-alpha-D-glucosamine = di-trans,octa-cis-undecaprenyl diphospho-[N-acetyl-alpha-D-glucosaminyl-(1-&gt;4)]-N-acetyl-alpha-D-muramoyl-L-alanyl-D-glutamyl-meso-2,6-diaminopimeloyl-D-alanyl-D-alanine + UDP + H(+). The protein operates within cell wall biogenesis; peptidoglycan biosynthesis. Functionally, cell wall formation. Catalyzes the transfer of a GlcNAc subunit on undecaprenyl-pyrophosphoryl-MurNAc-pentapeptide (lipid intermediate I) to form undecaprenyl-pyrophosphoryl-MurNAc-(pentapeptide)GlcNAc (lipid intermediate II). The polypeptide is UDP-N-acetylglucosamine--N-acetylmuramyl-(pentapeptide) pyrophosphoryl-undecaprenol N-acetylglucosamine transferase (Caldicellulosiruptor saccharolyticus (strain ATCC 43494 / DSM 8903 / Tp8T 6331)).